Here is a 266-residue protein sequence, read N- to C-terminus: L-aspartate dehydrogenase (266 aa).

NAD(+)-binding residues include A123 and N189. The active site involves H219.

Belongs to the L-aspartate dehydrogenase family.

It carries out the reaction L-aspartate + NADP(+) + H2O = oxaloacetate + NH4(+) + NADPH + H(+). The catalysed reaction is L-aspartate + NAD(+) + H2O = oxaloacetate + NH4(+) + NADH + H(+). It participates in cofactor biosynthesis; NAD(+) biosynthesis; iminoaspartate from L-aspartate (dehydrogenase route): step 1/1. Its function is as follows. Specifically catalyzes the NAD or NADP-dependent dehydrogenation of L-aspartate to iminoaspartate. The polypeptide is L-aspartate dehydrogenase (Cupriavidus taiwanensis (strain DSM 17343 / BCRC 17206 / CCUG 44338 / CIP 107171 / LMG 19424 / R1) (Ralstonia taiwanensis (strain LMG 19424))).